The sequence spans 363 residues: Peptide chain release factor 1 (363 aa).

An N5-methylglutamine modification is found at glutamine 237. A compositionally biased stretch (basic and acidic residues) spans 284 to 296 (EDEKRRSAEESTR). The interval 284–306 (EDEKRRSAEESTRRSLVASGDRS) is disordered.

The protein belongs to the prokaryotic/mitochondrial release factor family. In terms of processing, methylated by PrmC. Methylation increases the termination efficiency of RF1.

Its subcellular location is the cytoplasm. Its function is as follows. Peptide chain release factor 1 directs the termination of translation in response to the peptide chain termination codons UAG and UAA. The polypeptide is Peptide chain release factor 1 (Shewanella putrefaciens (strain CN-32 / ATCC BAA-453)).